A 65-amino-acid chain; its full sequence is Large ribosomal subunit protein uL29 (65 aa).

It belongs to the universal ribosomal protein uL29 family.

The protein is Large ribosomal subunit protein uL29 of Acinetobacter baumannii (strain AB307-0294).